Here is a 444-residue protein sequence, read N- to C-terminus: MQVTETLSEGLKRGFTVQVPATDIEERRTRRLAELAKTLKLPGFRPGKVPMTLVRQRYGRSVETEVLEETVNEATQTMVSERGLRPALQPKVELVRVDLDQDVEFKVELELLPDITLPDLGSVSLTRLKAEPSAEAVDKALEEIAQRQRNLEPVEEVRPAQKGDFLTVDFVGKTDGVAFQGGTGTDMDVEIAGTGFIPGFSEQMEGLSVGETRVIDVTFPEEYGVPELAGKPAQFEITAKALKKAVAPVIDDAFATKLGLDSLEKLREIVTQQIQNEYDQVSRLRVKRALLDALADQAAFEVPPTLVENEFNQIWQRVDADRKADRLDEDDKGKDEDTLRADYRKIAERRVRLGLLLAEIGRVNGVQVGNDELIRAMRAEASRYPGQEQAVLDFFRQNPQAIDSLRGPIFEEKVVDFVLETAKVDDKFVSIEELNADEDVAGIA.

Residues 163 to 248 (GDFLTVDFVG…AKALKKAVAP (86 aa)) enclose the PPIase FKBP-type domain.

It belongs to the FKBP-type PPIase family. Tig subfamily.

It localises to the cytoplasm. It catalyses the reaction [protein]-peptidylproline (omega=180) = [protein]-peptidylproline (omega=0). Functionally, involved in protein export. Acts as a chaperone by maintaining the newly synthesized protein in an open conformation. Functions as a peptidyl-prolyl cis-trans isomerase. The chain is Trigger factor from Granulibacter bethesdensis (strain ATCC BAA-1260 / CGDNIH1).